The primary structure comprises 73 residues: Translational regulator CsrA (73 aa).

The protein belongs to the CsrA/RsmA family. As to quaternary structure, homodimer; the beta-strands of each monomer intercalate to form a hydrophobic core, while the alpha-helices form wings that extend away from the core.

The protein localises to the cytoplasm. A translational regulator that binds mRNA to regulate translation initiation and/or mRNA stability. Usually binds in the 5'-UTR at or near the Shine-Dalgarno sequence preventing ribosome-binding, thus repressing translation. Its main target seems to be the major flagellin gene, while its function is anatagonized by FliW. The sequence is that of Translational regulator CsrA from Clostridium acetobutylicum (strain ATCC 824 / DSM 792 / JCM 1419 / IAM 19013 / LMG 5710 / NBRC 13948 / NRRL B-527 / VKM B-1787 / 2291 / W).